Consider the following 252-residue polypeptide: MSQHQKIYPVQDPEAATARPTAPLVPRGSSRSEHGDPSKVPLNQRPQRFVPLAPPKKRRSCCCRCFCYTFCFLLLLVVAVGASIGILYLVFKPKLPDYSIDRLQLTRFALNQDSSLTTAFNVTITAKNPNEKIGIYYEDGSKITVWYMEHQLSNGSLPKFYQGHENTTVIYVEMTGQTQNASGLRTTLEEQQQRTGNIPLRIRVNQPVRVKFGKLKLFEVRFLVRCGVFVDSLATNNVIKIQSSSCKFRLRL.

The tract at residues Met1–Pro46 is disordered. A helical transmembrane segment spans residues Phe70–Val90. Residues Asn121, Asn154, Asn166, and Asn180 are each glycosylated (N-linked (GlcNAc...) asparagine).

Homodimer. As to expression, highly expressed in seeds and at lower level in roots and senescing leaves. Expressed in leaves and flowers.

The protein localises to the cell membrane. It is found in the cytoplasm. Its subcellular location is the cytosol. Its function is as follows. Plays an important role in the abiotic stresses-induced abscisic acid (ABA) signaling and biosynthesis. Acts as a positive regulator of ABA-mediated seed germination inhibition. Functions downstream of ABF2/AREB1, ABF4/AREB2 and ABF3. This is NDR1/HIN1-like protein 6 from Arabidopsis thaliana (Mouse-ear cress).